The primary structure comprises 434 residues: Zinc finger protein Pegasus (434 aa).

The segment at 33–57 (VSSDKEAETLQGAGTDSDQNGLDHP) is disordered. 3 consecutive C2H2-type zinc fingers follow at residues 82–104 (LKCRYCNYASKGTARLIEHIRIH), 110–132 (HRCHLCPFASAYERHLEAHMRSH), and 138–161 (YKCELCSFRCSDRSNLSHHRRRKH). The segment covering 260-274 (GQLSSLPPDTQNPAS) has biased composition (polar residues). A disordered region spans residues 260–357 (GQLSSLPPDT…PSTPAPALPA (98 aa)). Low complexity predominate over residues 296-313 (CASAVSTSVAQSSSPASP). Residues 337 to 349 (RTSTPSISNSQPS) show a composition bias toward polar residues. C2H2-type zinc fingers lie at residues 364–386 (HHCQHCDMYFADNILYTIHMGCH) and 392–419 (FQCNICGCKCKNKYDFACHFARGACCQH).

Belongs to the Ikaros C2H2-type zinc-finger protein family. Probably self-associates.

It is found in the nucleus. Functionally, transcriptional repressor that binds the core 5'GNNTGTNG-3' DNA consensus sequence. This Xenopus tropicalis (Western clawed frog) protein is Zinc finger protein Pegasus (ikzf5).